The following is a 406-amino-acid chain: Calreticulin (406 aa).

Residues 1–17 form the signal peptide; sequence MMWCKTVIVLLATVGFI. Cysteine 105 and cysteine 137 are joined by a disulfide. Positions 109, 111, 128, and 135 each coordinate an alpha-D-glucoside. 7 tandem repeats follow at residues 191 to 202, 210 to 221, 227 to 238, 244 to 255, 259 to 269, 273 to 283, and 287 to 297. A 4 X approximate repeats region spans residues 191-255; sequence VESGNLEDDW…DATKPEDWDD (65 aa). Residues 207–251 show a composition bias toward basic and acidic residues; the sequence is KIKDPTATKPEDWDDRATIPDPDDKKPEDWDKPEHIPDPDATKPE. The tract at residues 207 to 259 is disordered; sequence KIKDPTATKPEDWDDRATIPDPDDKKPEDWDKPEHIPDPDATKPEDWDDEMDG. The 3 X approximate repeats stretch occupies residues 259–297; the sequence is GEWEPPMIDNPEFKGEWQPKQLDNPNYKGAWEHPEIANP. Aspartate 317 is a binding site for an alpha-D-glucoside. The interval 347–406 is disordered; it reads KNTQAGEKKMKEAQDEVQRKKDEEEAKKASDKDDEDEDDDDEEKDDESKQDKDQSEHDEL. Over residues 352–377 the composition is skewed to basic and acidic residues; it reads GEKKMKEAQDEVQRKKDEEEAKKASD. The span at 378 to 391 shows a compositional bias: acidic residues; it reads KDDEDEDDDDEEKD. Over residues 392 to 406 the composition is skewed to basic and acidic residues; the sequence is DESKQDKDQSEHDEL.

The protein belongs to the calreticulin family.

It localises to the endoplasmic reticulum lumen. In terms of biological role, molecular calcium-binding chaperone promoting folding, oligomeric assembly and quality control in the ER via the calreticulin/calnexin cycle. This lectin may interact transiently with almost all of the monoglucosylated glycoproteins that are synthesized in the ER. The protein is Calreticulin of Drosophila melanogaster (Fruit fly).